We begin with the raw amino-acid sequence, 154 residues long: Sec-independent protein translocase protein TatB (154 aa).

The chain crosses the membrane as a helical span at residues 1 to 21; sequence MIDIGITKLAIIGGIALIVIG.

The protein belongs to the TatB family. In terms of assembly, the Tat system comprises two distinct complexes: a TatABC complex, containing multiple copies of TatA, TatB and TatC subunits, and a separate TatA complex, containing only TatA subunits. Substrates initially bind to the TatABC complex, which probably triggers association of the separate TatA complex to form the active translocon.

It is found in the cell inner membrane. In terms of biological role, part of the twin-arginine translocation (Tat) system that transports large folded proteins containing a characteristic twin-arginine motif in their signal peptide across membranes. Together with TatC, TatB is part of a receptor directly interacting with Tat signal peptides. TatB may form an oligomeric binding site that transiently accommodates folded Tat precursor proteins before their translocation. This is Sec-independent protein translocase protein TatB from Albidiferax ferrireducens (strain ATCC BAA-621 / DSM 15236 / T118) (Rhodoferax ferrireducens).